The chain runs to 310 residues: Vomeronasal type-1 receptor 97 (310 aa).

The Extracellular segment spans residues 1–19 (MNKDNILHTDTNIKITLFS). The chain crosses the membrane as a helical span at residues 20–40 (EVSIGISANSALFFSHLFMLF). The Cytoplasmic portion of the chain corresponds to 41-49 (EKNRSKPID). A helical membrane pass occupies residues 50 to 70 (LYIAFLSLTQLMLLITIGLIA). Residues 71–93 (ADMFMSRGRWDSTTCQSLIYLHR) lie on the Extracellular side of the membrane. Cysteines 85 and 172 form a disulfide. A helical membrane pass occupies residues 94–114 (LLRGFTLCATCLLNVLWTITL). Over 115 to 131 (SPRSSCLTTFKHKSPHH) the chain is Cytoplasmic. Residues 132 to 152 (ISGAFLFFCVLYISFGSHLFL) form a helical membrane-spanning segment. The Extracellular segment spans residues 153–190 (STIATPNLTSDNFMYVTQSCSFLPMSYSRTSMFSTPMA). Residue asparagine 159 is glycosylated (N-linked (GlcNAc...) asparagine). The helical transmembrane segment at 191 to 211 (IREALLIGLIGLSSGYMVAFL) threads the bilayer. Topologically, residues 212 to 238 (WRHKNQARHLHSTSLSSKVSPEQRATR) are cytoplasmic. A helical membrane pass occupies residues 239–259 (TIMILMSFFVVLYILENVVFY). Residues 260-269 (SRMTFKDGSM) lie on the Extracellular side of the membrane. The helical transmembrane segment at 270–290 (FYCVQIIVSHSYATISPFVFI) threads the bilayer. Residues 291 to 310 (CTEKRIIKLWGSMSSRIVSI) are Cytoplasmic-facing.

It belongs to the G-protein coupled receptor 1 family. As to expression, expressed in 1-4% of neurons of the vomeronasal organ. Only one pheromone receptor gene may be expressed in a particular neuron. Not expressed in the main olfactory epithelium.

It localises to the cell membrane. In terms of biological role, putative pheromone receptor implicated in the regulation of social as well as reproductive behavior. In Rattus norvegicus (Rat), this protein is Vomeronasal type-1 receptor 97 (Vom1r97).